The following is a 466-amino-acid chain: Asparagine--tRNA ligase (466 aa).

This sequence belongs to the class-II aminoacyl-tRNA synthetase family. In terms of assembly, homodimer.

It localises to the cytoplasm. It carries out the reaction tRNA(Asn) + L-asparagine + ATP = L-asparaginyl-tRNA(Asn) + AMP + diphosphate + H(+). In Escherichia coli O139:H28 (strain E24377A / ETEC), this protein is Asparagine--tRNA ligase.